A 279-amino-acid polypeptide reads, in one-letter code: Replication protein A 32 kDa subunit A (279 aa).

Residues 1-39 (MMSFSQPDAFSPSQFTSSQNAAADSTTPSKSRGASSTMP) form a disordered region. The OB DNA-binding region spans 71 to 145 (VRLVGLVSGK…RATAFAIRPV (75 aa)). A disordered region spans residues 181 to 210 (GSSSSNGFSEMTTPTSVKSNPAPVLSVTNG). The span at 190 to 199 (EMTTPTSVKS) shows a compositional bias: polar residues.

This sequence belongs to the replication factor A protein 2 family. Heterotrimer of RPA1, RPA2 and RPA3 (canonical replication protein A complex). Interacts with RPA1A, RPA1B and RPA3. Post-translationally, phosphorylated in a cell-cycle-dependent manner (from the S phase until mitosis). In response to DNA damage, recruited to DNA-repair nuclear foci, as a hypophosphorylated form. Expressed in root tips, roots, shoot apical meristem (SAM), young leaves, flag leaves and ears, and at lower levels in mature leaves.

It is found in the nucleus. Its function is as follows. Component of the replication protein A complex (RPA) required for DNA recombination, repair and replication. The activity of RPA is mediated by single-stranded DNA binding and protein interactions. In Oryza sativa subsp. japonica (Rice), this protein is Replication protein A 32 kDa subunit A (RPA2A).